Reading from the N-terminus, the 223-residue chain is MKFPLLLALLVGGASALHLSSETSDSKSPLMDENLPRDAEISGPEGEECPPGEELMPLEGEKEEGSGSEGVPGDEGAVSGQDVTDVDLQCPKEEDTTSLMGDSGCKTCRYLLVRRAECFDKAQSVCRRCYRGTLASIHSFSVNFGIQSAVRGINQGQVWIGGRIKGWGRCKRFRWVDGSSWNFAYWAAGQPCPGGGRCVTLCTQGGHWRLSHCVKRRPFICSY.

A signal peptide spans 1–16 (MKFPLLLALLVGGASA). Positions 17 to 106 (LHLSSETSDS…TSLMGDSGCK (90 aa)) are cleaved as a propeptide — acidic. The segment at 20-81 (SSETSDSKSP…PGDEGAVSGQ (62 aa)) is disordered. Threonine 23 carries an O-linked (GalNAc...) threonine; partial glycan. The O-linked (GalNAc...) serine glycan is linked to serine 24. Serine 66 is a glycosylation site (O-linked (Xyl...) (chondroitin sulfate) serine). The region spanning 124–223 (SVCRRCYRGT…VKRRPFICSY (100 aa)) is the C-type lectin domain. Disulfide bonds link cysteine 126–cysteine 221 and cysteine 198–cysteine 213.

Nitrated.

It localises to the secreted. Functionally, cytotoxin and helminthotoxin. MBP also induces non-cytolytic histamine release from basophils. It is involved in antiparasitic defense mechanisms and immune hypersensitivity reactions. This Mus musculus (Mouse) protein is Bone marrow proteoglycan (Prg2).